We begin with the raw amino-acid sequence, 595 residues long: Elongation factor 4 (595 aa).

In terms of domain architecture, tr-type G spans 2-183 (KNIRNFCIIA…AIVEQVPAPA (182 aa)). GTP contacts are provided by residues 14 to 19 (DHGKST) and 130 to 133 (NKVD).

It belongs to the TRAFAC class translation factor GTPase superfamily. Classic translation factor GTPase family. LepA subfamily.

It localises to the cell inner membrane. It catalyses the reaction GTP + H2O = GDP + phosphate + H(+). Required for accurate and efficient protein synthesis under certain stress conditions. May act as a fidelity factor of the translation reaction, by catalyzing a one-codon backward translocation of tRNAs on improperly translocated ribosomes. Back-translocation proceeds from a post-translocation (POST) complex to a pre-translocation (PRE) complex, thus giving elongation factor G a second chance to translocate the tRNAs correctly. Binds to ribosomes in a GTP-dependent manner. The sequence is that of Elongation factor 4 from Porphyromonas gingivalis (strain ATCC BAA-308 / W83).